A 374-amino-acid polypeptide reads, in one-letter code: Type II methyltransferase M.NgoFVII (374 aa).

The SAM-dependent MTase C5-type domain maps to 16-344; sequence PKILSLFSGC…KSILPIFSDN (329 aa). Cys-88 is a catalytic residue.

The protein belongs to the class I-like SAM-binding methyltransferase superfamily. C5-methyltransferase family.

It carries out the reaction a 2'-deoxycytidine in DNA + S-adenosyl-L-methionine = a 5-methyl-2'-deoxycytidine in DNA + S-adenosyl-L-homocysteine + H(+). A methylase, recognizes the double-stranded sequence 5'-GCSGC-3', methylates C-5 on both strands, and protects the DNA from cleavage by the NgoFVII endonuclease. This Neisseria gonorrhoeae protein is Type II methyltransferase M.NgoFVII (ngoFVIIM).